Reading from the N-terminus, the 205-residue chain is Thiamine-phosphate synthase (205 aa).

4-amino-2-methyl-5-(diphosphooxymethyl)pyrimidine contacts are provided by residues 37–41 and Asn69; that span reads QVREK. Mg(2+) contacts are provided by Asp70 and Asp89. Ser108 serves as a coordination point for 4-amino-2-methyl-5-(diphosphooxymethyl)pyrimidine. 134 to 136 is a 2-[(2R,5Z)-2-carboxy-4-methylthiazol-5(2H)-ylidene]ethyl phosphate binding site; that stretch reads TGS. A 4-amino-2-methyl-5-(diphosphooxymethyl)pyrimidine-binding site is contributed by Lys137. Residues Gly165 and 185-186 each bind 2-[(2R,5Z)-2-carboxy-4-methylthiazol-5(2H)-ylidene]ethyl phosphate; that span reads IS.

Belongs to the thiamine-phosphate synthase family. Mg(2+) serves as cofactor.

The enzyme catalyses 2-[(2R,5Z)-2-carboxy-4-methylthiazol-5(2H)-ylidene]ethyl phosphate + 4-amino-2-methyl-5-(diphosphooxymethyl)pyrimidine + 2 H(+) = thiamine phosphate + CO2 + diphosphate. The catalysed reaction is 2-(2-carboxy-4-methylthiazol-5-yl)ethyl phosphate + 4-amino-2-methyl-5-(diphosphooxymethyl)pyrimidine + 2 H(+) = thiamine phosphate + CO2 + diphosphate. It carries out the reaction 4-methyl-5-(2-phosphooxyethyl)-thiazole + 4-amino-2-methyl-5-(diphosphooxymethyl)pyrimidine + H(+) = thiamine phosphate + diphosphate. It functions in the pathway cofactor biosynthesis; thiamine diphosphate biosynthesis; thiamine phosphate from 4-amino-2-methyl-5-diphosphomethylpyrimidine and 4-methyl-5-(2-phosphoethyl)-thiazole: step 1/1. Condenses 4-methyl-5-(beta-hydroxyethyl)thiazole monophosphate (THZ-P) and 2-methyl-4-amino-5-hydroxymethyl pyrimidine pyrophosphate (HMP-PP) to form thiamine monophosphate (TMP). The sequence is that of Thiamine-phosphate synthase from Clostridium botulinum (strain Langeland / NCTC 10281 / Type F).